A 287-amino-acid chain; its full sequence is Phosphatidylserine decarboxylase proenzyme (287 aa).

Active-site charge relay system; for autoendoproteolytic cleavage activity residues include aspartate 86, histidine 143, and serine 250. The active-site Schiff-base intermediate with substrate; via pyruvic acid; for decarboxylase activity is serine 250. Serine 250 is modified (pyruvic acid (Ser); by autocatalysis).

It belongs to the phosphatidylserine decarboxylase family. PSD-B subfamily. Prokaryotic type I sub-subfamily. As to quaternary structure, heterodimer of a large membrane-associated beta subunit and a small pyruvoyl-containing alpha subunit. Requires pyruvate as cofactor. Is synthesized initially as an inactive proenzyme. Formation of the active enzyme involves a self-maturation process in which the active site pyruvoyl group is generated from an internal serine residue via an autocatalytic post-translational modification. Two non-identical subunits are generated from the proenzyme in this reaction, and the pyruvate is formed at the N-terminus of the alpha chain, which is derived from the carboxyl end of the proenzyme. The autoendoproteolytic cleavage occurs by a canonical serine protease mechanism, in which the side chain hydroxyl group of the serine supplies its oxygen atom to form the C-terminus of the beta chain, while the remainder of the serine residue undergoes an oxidative deamination to produce ammonia and the pyruvoyl prosthetic group on the alpha chain. During this reaction, the Ser that is part of the protease active site of the proenzyme becomes the pyruvoyl prosthetic group, which constitutes an essential element of the active site of the mature decarboxylase.

It localises to the cell membrane. It carries out the reaction a 1,2-diacyl-sn-glycero-3-phospho-L-serine + H(+) = a 1,2-diacyl-sn-glycero-3-phosphoethanolamine + CO2. Its pathway is phospholipid metabolism; phosphatidylethanolamine biosynthesis; phosphatidylethanolamine from CDP-diacylglycerol: step 2/2. In terms of biological role, catalyzes the formation of phosphatidylethanolamine (PtdEtn) from phosphatidylserine (PtdSer). This Wigglesworthia glossinidia brevipalpis protein is Phosphatidylserine decarboxylase proenzyme.